Consider the following 157-residue polypeptide: Ribonuclease H (157 aa).

The region spanning 1–146 (MPDLVAYTDG…ADELARAGMA (146 aa)) is the RNase H type-1 domain. Mg(2+) contacts are provided by Asp-9, Glu-52, Asp-74, and Asp-138.

Belongs to the RNase H family. Monomer. The cofactor is Mg(2+).

It localises to the cytoplasm. The enzyme catalyses Endonucleolytic cleavage to 5'-phosphomonoester.. In terms of biological role, endonuclease that specifically degrades the RNA of RNA-DNA hybrids. The chain is Ribonuclease H from Jannaschia sp. (strain CCS1).